A 151-amino-acid polypeptide reads, in one-letter code: Inorganic triphosphatase (151 aa).

Residues 1-148 form the CYTH domain; sequence MTEIERKFLV…KRYKNKALAL (148 aa). Tyrosine 27 acts as the Proton acceptor in catalysis.

As to quaternary structure, homodimer.

It catalyses the reaction triphosphate + H2O = phosphate + diphosphate. Activated by magnesium and mangenese ions, and inhibited by calcium, zinc and copper ions. Its function is as follows. Involved in the hydrolysis of the beta-gamma-phosphoanhydride linkage of triphosphate-containing substrates (inorganic or nucleoside-linked). Catalyzes the hydrolysis of inorganic triphosphate (PPPi). The enzyme has a strong preference for linear PPPi compared with cyclic PPPi (cyclic trimetaphosphate) and to the linear P4. The longer chains polyphosphate are not hydrolyzed. It has only a slight thiamine triphosphatase (ThTPase) activity. Nucleoside triphosphatase activity is negligible in the presence of magnesium, but a small activity is observed in the presence of manganese, in particular with GTP. The protein is Inorganic triphosphatase of Nitrosomonas europaea (strain ATCC 19718 / CIP 103999 / KCTC 2705 / NBRC 14298).